The sequence spans 101 residues: Immunity protein CdiI-2 (101 aa).

As to quaternary structure, specifically interacts with the truncated CT fragment of cognate toxin protein CdiA-2, which inhibits CdiA-2 tRNA nuclease activity.

Immunity protein component of a toxin-immunity protein module, which functions as a cellular contact-dependent growth inhibition (CDI) system. CDI modules allow bacteria to communicate with and inhibit the growth of closely related neighboring bacteria in a contact-dependent fashion. Neutralizes the toxic activity of cognate toxin CdiA (C-terminal 301 residue CT fragment) upon expression in E.coli. Does not inhibit toxic activity of CdiA from other strains of B.pseudomallei. Its function is as follows. Expression of this cdiAIB locus in B.thailandensis confers protection against other bacteria carrying the locus; growth inhibition requires cellular contact. This chain is Immunity protein CdiI-2 (cdiI2), found in Burkholderia pseudomallei (strain 1026b).